Consider the following 461-residue polypeptide: Phosphoenolpyruvate carboxylase (461 aa).

This sequence belongs to the PEPCase type 2 family. As to quaternary structure, homotetramer. Requires Mg(2+) as cofactor.

It catalyses the reaction oxaloacetate + phosphate = phosphoenolpyruvate + hydrogencarbonate. In terms of biological role, catalyzes the irreversible beta-carboxylation of phosphoenolpyruvate (PEP) to form oxaloacetate (OAA), a four-carbon dicarboxylic acid source for the tricarboxylic acid cycle. The chain is Phosphoenolpyruvate carboxylase from Pyrobaculum islandicum (strain DSM 4184 / JCM 9189 / GEO3).